We begin with the raw amino-acid sequence, 149 residues long: D-aminoacyl-tRNA deacylase (149 aa).

The Gly-cisPro motif, important for rejection of L-amino acids motif lies at 137 to 138 (GP).

The protein belongs to the DTD family. In terms of assembly, homodimer.

The protein resides in the cytoplasm. The catalysed reaction is glycyl-tRNA(Ala) + H2O = tRNA(Ala) + glycine + H(+). The enzyme catalyses a D-aminoacyl-tRNA + H2O = a tRNA + a D-alpha-amino acid + H(+). In terms of biological role, an aminoacyl-tRNA editing enzyme that deacylates mischarged D-aminoacyl-tRNAs. Also deacylates mischarged glycyl-tRNA(Ala), protecting cells against glycine mischarging by AlaRS. Acts via tRNA-based rather than protein-based catalysis; rejects L-amino acids rather than detecting D-amino acids in the active site. By recycling D-aminoacyl-tRNA to D-amino acids and free tRNA molecules, this enzyme counteracts the toxicity associated with the formation of D-aminoacyl-tRNA entities in vivo and helps enforce protein L-homochirality. The protein is D-aminoacyl-tRNA deacylase of Clostridium botulinum (strain Kyoto / Type A2).